A 150-amino-acid polypeptide reads, in one-letter code: Large ribosomal subunit protein bL9 (150 aa).

The protein belongs to the bacterial ribosomal protein bL9 family.

Functionally, binds to the 23S rRNA. The polypeptide is Large ribosomal subunit protein bL9 (Stenotrophomonas maltophilia (strain R551-3)).